The primary structure comprises 160 residues: RxLR effector protein PexRD44 (160 aa).

Residues 1–21 (MRLLLWVLISMLSIALSSCAA) form the signal peptide. Residues 54–76 (RFLRGESSKIVNLKQEEGVFEER) carry the RxLR-dEER motif.

It belongs to the RxLR effector family.

The protein resides in the secreted. The protein localises to the host cell membrane. Its subcellular location is the host nucleus. It is found in the host nucleolus. Functionally, effector that is involved in host plant infection. Contributes to virulence during the early infection stage, by inhibiting plant defense responses induced by both PAMP-triggered immunity (PTI) and effector-triggered immunity (ETI). The polypeptide is RxLR effector protein PexRD44 (Phytophthora infestans (strain T30-4) (Potato late blight agent)).